Reading from the N-terminus, the 392-residue chain is Histidinol-phosphate aminotransferase (392 aa).

The tract at residues 1–24 is disordered; that stretch reads MSAVLKDPIPAPGRPESTRPEPRP. Residue Lys236 is modified to N6-(pyridoxal phosphate)lysine.

This sequence belongs to the class-II pyridoxal-phosphate-dependent aminotransferase family. Histidinol-phosphate aminotransferase subfamily. As to quaternary structure, homodimer. Pyridoxal 5'-phosphate serves as cofactor.

The catalysed reaction is L-histidinol phosphate + 2-oxoglutarate = 3-(imidazol-4-yl)-2-oxopropyl phosphate + L-glutamate. Its pathway is amino-acid biosynthesis; L-histidine biosynthesis; L-histidine from 5-phospho-alpha-D-ribose 1-diphosphate: step 7/9. The protein is Histidinol-phosphate aminotransferase of Xanthobacter autotrophicus (strain ATCC BAA-1158 / Py2).